A 90-amino-acid polypeptide reads, in one-letter code: UPF0297 protein OEOE_1166 (90 aa).

The protein belongs to the UPF0297 family.

The chain is UPF0297 protein OEOE_1166 from Oenococcus oeni (strain ATCC BAA-331 / PSU-1).